Consider the following 291-residue polypeptide: Cell division protein FtsX (291 aa).

Topologically, residues 1 to 18 (MSSNFDKFQKRRLISSYF) are cytoplasmic. A helical membrane pass occupies residues 19–39 (SVVLSVFLVLFLLGVLGLFII). The Periplasmic segment spans residues 40-162 (NSKKLADDFK…VNLVNDNIKK (123 aa)). Residues 163-183 (VSMWILIISGFLTVIAVLLIN) traverse the membrane as a helical segment. The Cytoplasmic portion of the chain corresponds to 184–220 (SSLRLSIHSNRFIIKTMQMVGATKSFIRKPFVMRSVK). The helical transmembrane segment at 221–241 (LGMLGALLAIIALIGLLFYVE) threads the bilayer. Over 242–253 (TNFPGLGILEDK) the chain is Periplasmic. Residues 254–274 (ALIGLVLLAVFGLGVLITWVS) traverse the membrane as a helical segment. Over 275-291 (THFATQRFLNLRTDDLY) the chain is Cytoplasmic.

This sequence belongs to the ABC-4 integral membrane protein family. FtsX subfamily.

Its subcellular location is the cell inner membrane. Functionally, required for cell division and gliding motility. The polypeptide is Cell division protein FtsX (Flavobacterium johnsoniae (strain ATCC 17061 / DSM 2064 / JCM 8514 / BCRC 14874 / CCUG 350202 / NBRC 14942 / NCIMB 11054 / UW101) (Cytophaga johnsonae)).